A 652-amino-acid chain; its full sequence is MTGEIPRGRRWSARTTRASRLNSPLRAFLHTETGSARVLLAAAVVALAWVNLDESSYESLWGAVFSVRLGSWQVSHDLRFWVNSGLMTFFFLVIGLEVRRDFDLGELRERRRLMLPLLAGIGGILAPIAIYLAFNAGKPTAVGWGVVMATDTALALGMLAVLGPRFSDRLRNFLLTVAVVDDLIVIVVLAIAYPEHPSPMALFVAAGIFALVLLIRAAGVRWGPGYLLLGVAAWLAVSESGVDPVVVGLVMGLFTYAYVPARTELQRAADRFRLFREQPSPQLARSVRAGLASALSPNDRLQHIYHPWASYLIVPLFALANVGVVVDRELLARAATSPVTLGVLFAYVVGKPAGIVIASMLVPRLSHNQFRAPVGWAAIIGVGTVSGIGFTIALLIATHALHGPALDEAKVGILVATVGASLTTWLVFRLAARLAPARRARALLGASEGIIDLMVPVDPDRDHVRGPREAPVTVVEYADFECPYCGQAEPAVRELLVDYTSVRYVWRHLPLTDVHPYAQMAAEAAEAAAEQGAFWEMHDLLLAHQDELRPADLLRYAERLDLDLDRFREHLADRRGAGRIAQDVDAADLSSVSGTPTFFVNGRRHHGPYNIEALSAAVMSAFASARLRPEGGREPDHRSEAGSEQPDEEPGT.

Positions 1-428 (MTGEIPRGRR…GASLTTWLVF (428 aa)) are na(+)/H(+) antiporter NhaA. Helical transmembrane passes span 32-52 (ETGS…WVNL), 78-98 (LRFW…GLEV), 114-134 (MLPL…YLAF), 142-162 (VGWG…LAVL), 173-193 (FLLT…AIAY), 200-220 (MALF…AAGV), 227-249 (LLLG…VVGL), 306-326 (HPWA…GVVV), 342-362 (GVLF…SMLV), 376-396 (WAAI…ALLI), and 411-431 (VGIL…FRLA). In terms of domain architecture, Thioredoxin spans 429 to 623 (RLAARLAPAR…LSAAVMSAFA (195 aa)). Residues 626-652 (RLRPEGGREPDHRSEAGSEQPDEEPGT) form a disordered region. A compositionally biased stretch (basic and acidic residues) spans 627–641 (LRPEGGREPDHRSEA).

This sequence in the N-terminal section; belongs to the NhaA Na(+)/H(+) (TC 2.A.33) antiporter family.

The protein resides in the cell membrane. It carries out the reaction Na(+)(in) + 2 H(+)(out) = Na(+)(out) + 2 H(+)(in). In terms of biological role, na(+)/H(+) antiporter that extrudes sodium in exchange for external protons. The chain is Na(+)/H(+) antiporter NhaA 3 from Salinispora tropica (strain ATCC BAA-916 / DSM 44818 / JCM 13857 / NBRC 105044 / CNB-440).